Consider the following 582-residue polypeptide: Leucine-rich repeat protein SHOC-2 (582 aa).

Composition is skewed to basic and acidic residues over residues 1–29 (MSSSLGKEKDSKEKDPKVPSAKEREKEAK) and 36–57 (KESKEKEPKTKGKDAKDGKKDS). The interval 1–88 (MSSSLGKEKD…PGTRKKSSNA (88 aa)) is disordered. An RVxF motif; important for interaction with PP1c motif is present at residues 63–66 (GVAF). 20 LRR repeats span residues 101–122 (NSMRLDLSKRSIHILPSSIKEL), 124–145 (QLTELYLYSNKLQSLPAEVGCL), 147–169 (NLMTLALSENSLTSLPDSLDNLK), 170–191 (KLRMLDLRHNKLREIPSVVYRL), 193–214 (SLTTLYLRFNRITTVEKDIKNL), 216–237 (KLSMLSIRENKIKQLPAEIGEL), 239–260 (NLITLDVAHNQLEHLPKEIGNC), 262–283 (QITNLDLQHNELLDLPDTIGNL), 285–307 (SLSRLGLRYNRLSAIPRSLAKCS), 308–329 (ALEELNLENNNISTLPESLLSS), 332–353 (KLNSLTLARNCFQLYPVGGPSQ), 356–377 (TIYSLNMEHNRINKIPFGIFSR), 380–400 (VLSKLNMKDNQLTSLPLDFGT), 403–424 (SMVELNLATNQLTKIPEDVSGL), 426–448 (SLEVLILSNNLLKKLPHGLGNLR), 449–470 (KLRELDLEENKLESLPNEIAYL), 472–494 (DLQKLVLTNNQLTTLPRGIGHLT), 495–516 (NLTHLGLGENLLTHLPEEIGTL), 518–540 (NLEELYLNDNPNLHSLPFELALC), and 542–563 (KLSIMSIENCPLSHLPPQIVAG).

This sequence belongs to the SHOC2 family. As to quaternary structure, component of the SHOC2-MRAS-PP1c (SMP) complex consisting of SHOC2, GTP-bound M-Ras/MRAS and the catalytic subunit of protein phosphatase 1 (either PPP1CA, PPP1CB or PPP1CC). SHOC2 and PP1c preferably bind M-Ras/MRAS, but they also bind K-Ras/KRAS, N-Ras/NRAS and H-Ras/HRAS; these interactions are GTP-dependent and both SHOC2 and PP1c are required to form a stable complex. Interacts with PP1c in the absence of Ras GTPases. Interacts with M-Ras/MRAS and RAF1. Interacts with ERBIN; disrupts the interaction with RAF1 and Ras, preventing the activation of the Ras signaling pathway. Interacts with LZTR1.

The protein localises to the cytoplasm. Its subcellular location is the nucleus. Its function is as follows. Core component of the SHOC2-MRAS-PP1c (SMP) holophosphatase complex that regulates activation of the MAPK pathway. Acts as a scaffolding protein in the SMP complex. The SMP complex specifically dephosphorylates the inhibitory phosphorylation at 'Ser-259' of RAF1 kinase, 'Ser-365' of BRAF kinase and 'Ser-214' of ARAF kinase, stimulating their kinase activities. The SMP complex enhances the dephosphorylation activity and substrate specificity of PP1c. The chain is Leucine-rich repeat protein SHOC-2 (SHOC2) from Homo sapiens (Human).